The primary structure comprises 148 residues: Putative adenylate kinase (148 aa).

Positions 9, 11, 12, 13, and 14 each coordinate ATP. Residues 28 to 44 (EGNALAVKYGCLSGDEV) are NMP. The LID stretch occupies residues 91–101 (DRGYSPEKIDE). Position 92 (arginine 92) interacts with ATP.

Belongs to the adenylate kinase family. AK6 subfamily. As to quaternary structure, interacts with uS11. Not a structural component of 40S pre-ribosomes, but transiently interacts with them by binding to uS11.

The catalysed reaction is AMP + ATP = 2 ADP. It catalyses the reaction ATP + H2O = ADP + phosphate + H(+). In terms of biological role, broad-specificity nucleoside monophosphate (NMP) kinase that catalyzes the reversible transfer of the terminal phosphate group between nucleoside triphosphates and monophosphates. Also has ATPase activity. Involved in the late maturation steps of the 30S ribosomal particles, specifically 16S rRNA maturation. While NMP activity is not required for ribosome maturation, ATPase activity is. Associates transiently with small ribosomal subunit protein uS11. ATP hydrolysis breaks the interaction with uS11. May temporarily remove uS11 from the ribosome to enable a conformational change of the ribosomal RNA that is needed for the final maturation step of the small ribosomal subunit. The sequence is that of Putative adenylate kinase from Thermoplasma acidophilum (strain ATCC 25905 / DSM 1728 / JCM 9062 / NBRC 15155 / AMRC-C165).